A 429-amino-acid chain; its full sequence is Glutamate-1-semialdehyde 2,1-aminomutase 1 (429 aa).

An N6-(pyridoxal phosphate)lysine modification is found at Lys-268.

The protein belongs to the class-III pyridoxal-phosphate-dependent aminotransferase family. HemL subfamily. As to quaternary structure, homodimer. The cofactor is pyridoxal 5'-phosphate.

The protein resides in the cytoplasm. The catalysed reaction is (S)-4-amino-5-oxopentanoate = 5-aminolevulinate. It functions in the pathway porphyrin-containing compound metabolism; protoporphyrin-IX biosynthesis; 5-aminolevulinate from L-glutamyl-tRNA(Glu): step 2/2. In Listeria innocua serovar 6a (strain ATCC BAA-680 / CLIP 11262), this protein is Glutamate-1-semialdehyde 2,1-aminomutase 1.